A 1393-amino-acid chain; its full sequence is DNA-directed RNA polymerase subunit beta' (1393 aa).

Zn(2+)-binding residues include C72, C74, C87, and C90. Positions 463, 465, and 467 each coordinate Mg(2+). Zn(2+) contacts are provided by C812, C887, C894, and C897.

This sequence belongs to the RNA polymerase beta' chain family. As to quaternary structure, the RNAP catalytic core consists of 2 alpha, 1 beta, 1 beta' and 1 omega subunit. When a sigma factor is associated with the core the holoenzyme is formed, which can initiate transcription. Mg(2+) serves as cofactor. Requires Zn(2+) as cofactor.

It catalyses the reaction RNA(n) + a ribonucleoside 5'-triphosphate = RNA(n+1) + diphosphate. In terms of biological role, DNA-dependent RNA polymerase catalyzes the transcription of DNA into RNA using the four ribonucleoside triphosphates as substrates. This is DNA-directed RNA polymerase subunit beta' from Chlamydia pneumoniae (Chlamydophila pneumoniae).